Reading from the N-terminus, the 239-residue chain is Caffeoyl-CoA O-methyltransferase 1 (239 aa).

Residue lysine 13 participates in substrate binding. Residues threonine 55, glutamate 77, 79–80, serine 85, aspartate 103, and alanine 132 contribute to the S-adenosyl-L-methionine site; that span reads GV. Aspartate 155 contributes to the substrate binding site. Aspartate 155 is an a divalent metal cation binding site. Position 157 (aspartate 157) interacts with S-adenosyl-L-methionine. Residues aspartate 181 and asparagine 182 each coordinate a divalent metal cation. Position 186 (asparagine 186) interacts with substrate.

Belongs to the class I-like SAM-binding methyltransferase superfamily. Cation-dependent O-methyltransferase family. CCoAMT subfamily. Monomer. The cofactor is Mg(2+). In terms of tissue distribution, mostly expressed in the bottom and middle parts of the stems.

The enzyme catalyses (E)-caffeoyl-CoA + S-adenosyl-L-methionine = (E)-feruloyl-CoA + S-adenosyl-L-homocysteine + H(+). Its pathway is aromatic compound metabolism; phenylpropanoid biosynthesis. Functionally, methylates caffeoyl-CoA to feruloyl-CoA and 5-hydroxyferuloyl-CoA to sinapoyl-CoA. Plays a role in the synthesis of feruloylated polysaccharides. Involved in the reinforcement of the plant cell wall. Also involved in the responding to wounding or pathogen challenge by the increased formation of cell wall-bound ferulic acid polymers. In Nicotiana tabacum (Common tobacco), this protein is Caffeoyl-CoA O-methyltransferase 1 (CCOAOMT1).